A 900-amino-acid chain; its full sequence is Periodic tryptophan protein 2 (900 aa).

WD repeat units lie at residues 10 to 47, 50 to 89, 91 to 129, 139 to 178, and 185 to 229; these read GAPYRGGNAVITKNTQLISPVGNRVSVTDLSKNHSVTL, ETSTNICRLASSPDGTFLLAVDEQNRCLFINLPRRVVLHR, TFKDKVGALKFSPNGKFIAVGIGKLVEIWRSPGFRRAVL, NSDDKVVSLEWSLDSDYLLVGSRDLAARLFCVRKLKGVLN, and GHRD…VKMD. The interval 228–284 is disordered; the sequence is MDESEDGHSEPPSPVTPDRADEVMVENGGGVGTELKKRKEYDGKGLESDEEGDDDDE. Residues 261–274 are compositionally biased toward basic and acidic residues; it reads ELKKRKEYDGKGLE. A Phosphoserine modification is found at serine 275. Positions 275 to 284 are enriched in acidic residues; the sequence is SDEEGDDDDE. 8 WD repeats span residues 302–341, 344–384, 387–426, 429–468, 472–512, 515–554, 557–596, and 619–658; these read QASAKVTACDYHQGLDMVVVGFSNGVFGLYQMPDFICIHL, ISRQ…YILK, GHYFDVNCVTYSPDSQLLATGADDNKVKVWNVMSGTCFIT, EHTNAVTALHFMADNHSLLSASLDGTVRAWDFKRYKNYKT, PTPR…IKDI, GHEAPVHGLMFSPLTQLLASSSWDYTVRLWDVFASKGTVE, RHNHDVLTVAFRPDGKQLASSTLDGQINFWDTIEGVLMYT, and SSGKCFTTLCYSADGGYILAAGTSRYICMYDIADQVLLRR. Residues 684–720 form a disordered region; it reads PIDLIDDDNSDEEGGIDKQSRGNLGYDLPGSRPNRGR. Over residues 687–697 the composition is skewed to acidic residues; it reads LIDDDNSDEEG. One copy of the WD 14 repeat lies at 720–759; sequence RPIIRTKSLSIAPTGRSFAAATTEGVLIFSIDDTFIFDPT.

The protein belongs to the WD repeat PWP2 family. In terms of assembly, component of the ribosomal small subunit (SSU) processome. Interacts with TBP1 in the nucleus. Expressed constitutively and ubiquitously; observed in seeds, seedlings, roots, leaves, stems, flowers and siliques.

It localises to the nucleus. The protein localises to the nucleolus. Its function is as follows. Involved in nucleolar processing of pre-18S ribosomal RNA. Plays a role early in ribosome biogenesis, especially in the maturation of 5.8S rRNA. Required for guard cell functions. The polypeptide is Periodic tryptophan protein 2 (Arabidopsis thaliana (Mouse-ear cress)).